Consider the following 292-residue polypeptide: tRNA pseudouridine synthase B (292 aa).

Aspartate 38 serves as the catalytic Nucleophile.

This sequence belongs to the pseudouridine synthase TruB family. Type 1 subfamily.

The enzyme catalyses uridine(55) in tRNA = pseudouridine(55) in tRNA. Functionally, responsible for synthesis of pseudouridine from uracil-55 in the psi GC loop of transfer RNAs. The protein is tRNA pseudouridine synthase B of Streptococcus gordonii (strain Challis / ATCC 35105 / BCRC 15272 / CH1 / DL1 / V288).